We begin with the raw amino-acid sequence, 1127 residues long: Elongation factor-like GTPase 1 (1127 aa).

One can recognise a tr-type G domain in the interval A17–Y272. GTP is bound by residues A26–T33, D92–H96, and N146–D149. The interval K429–S496 is disordered. Composition is skewed to basic and acidic residues over residues M438–K452 and S474–E484. An N6-acetyllysine modification is found at K528.

This sequence belongs to the TRAFAC class translation factor GTPase superfamily. Classic translation factor GTPase family. As to quaternary structure, associates with the 60S ribosomal subunit. Found in a complex consisting of the 60S ribosomal subunit, SBDS and EFL1.

It carries out the reaction GTP + H2O = GDP + phosphate + H(+). Its activity is regulated as follows. GTPase activity is stimulated in the presence of 60S ribosome subunits. In terms of biological role, GTPase involved in the biogenesis of the 60S ribosomal subunit and translational activation of ribosomes. Together with SBDS, triggers the GTP-dependent release of EIF6 from 60S pre-ribosomes in the cytoplasm, thereby activating ribosomes for translation competence by allowing 80S ribosome assembly and facilitating EIF6 recycling to the nucleus, where it is required for 60S rRNA processing and nuclear export. This Mus musculus (Mouse) protein is Elongation factor-like GTPase 1 (Efl1).